Here is a 234-residue protein sequence, read N- to C-terminus: NAD-dependent protein deacylase (234 aa).

The 234-residue stretch at 1–234 (MKNLVILSGA…IEMASQEMLK (234 aa)) folds into the Deacetylase sirtuin-type domain. 9–28 (GAGISAESGIKTFRDAGGLW) is a binding site for NAD(+). Substrate-binding residues include tyrosine 53 and arginine 56. 86-89 (QNVD) contacts NAD(+). Residue histidine 104 is the Proton acceptor of the active site. Residues 169–171 (GTS) and methionine 217 contribute to the NAD(+) site.

It belongs to the sirtuin family. Class III subfamily.

It is found in the cytoplasm. It catalyses the reaction N(6)-acetyl-L-lysyl-[protein] + NAD(+) + H2O = 2''-O-acetyl-ADP-D-ribose + nicotinamide + L-lysyl-[protein]. The enzyme catalyses N(6)-succinyl-L-lysyl-[protein] + NAD(+) + H2O = 2''-O-succinyl-ADP-D-ribose + nicotinamide + L-lysyl-[protein]. In terms of biological role, NAD-dependent lysine deacetylase and desuccinylase that specifically removes acetyl and succinyl groups on target proteins. Modulates the activities of several proteins which are inactive in their acylated form. In Helicobacter pylori (strain J99 / ATCC 700824) (Campylobacter pylori J99), this protein is NAD-dependent protein deacylase.